The following is a 268-amino-acid chain: Tryptophan synthase alpha chain (268 aa).

Residues Glu49 and Asp60 each act as proton acceptor in the active site.

Belongs to the TrpA family. In terms of assembly, tetramer of two alpha and two beta chains.

The catalysed reaction is (1S,2R)-1-C-(indol-3-yl)glycerol 3-phosphate + L-serine = D-glyceraldehyde 3-phosphate + L-tryptophan + H2O. Its pathway is amino-acid biosynthesis; L-tryptophan biosynthesis; L-tryptophan from chorismate: step 5/5. Its function is as follows. The alpha subunit is responsible for the aldol cleavage of indoleglycerol phosphate to indole and glyceraldehyde 3-phosphate. The protein is Tryptophan synthase alpha chain of Vibrio metschnikovii.